A 346-amino-acid polypeptide reads, in one-letter code: MKTLTIRQPDDWHLHLRDGSVLQAVAEHSAAHFARAIIMPNLVPPVVTTRDAAAYRERILAALSEGSAFTPLMTLYLTESSCADDIEAGFRSGLIKAVKLYPAGATTNSQSGVRNIEAVYPVLERMAKIGLPLCVHGEVTDPAVDIFDREAVFIERVLQPLRRRLPELRIVMEHVTTKDGVDFALSQDENVGATITTHHLIINRNAILAGGIRPHYYCLPVAKRESHRLALRAAAISGEGRFFLGTDSAPHLDPLKECACGCAGVFNAPNTMACLAHVFEEEGALDRLEAFTSLNGPAFYRLPPNEKRITLRRYDEPLEMERKVSVGDEAITVFDPMFPIHWKVED.

Zn(2+) contacts are provided by histidine 13 and histidine 15. Substrate-binding positions include 15–17 and asparagine 41; that span reads HLR. Lysine 99, histidine 136, and histidine 174 together coordinate Zn(2+). Lysine 99 carries the post-translational modification N6-carboxylysine. Substrate is bound at residue histidine 136. Position 219 (leucine 219) interacts with substrate. Residue aspartate 247 coordinates Zn(2+). The active site involves aspartate 247. Positions 251 and 263 each coordinate substrate.

This sequence belongs to the metallo-dependent hydrolases superfamily. DHOase family. Class II DHOase subfamily. As to quaternary structure, homodimer. Zn(2+) is required as a cofactor.

The enzyme catalyses (S)-dihydroorotate + H2O = N-carbamoyl-L-aspartate + H(+). It functions in the pathway pyrimidine metabolism; UMP biosynthesis via de novo pathway; (S)-dihydroorotate from bicarbonate: step 3/3. Catalyzes the reversible cyclization of carbamoyl aspartate to dihydroorotate. This Chelativorans sp. (strain BNC1) protein is Dihydroorotase.